A 242-amino-acid chain; its full sequence is ATP-dependent dethiobiotin synthetase BioD (242 aa).

12 to 17 (EVGKTV) serves as a coordination point for ATP. A Mg(2+)-binding site is contributed by Thr-16. Lys-37 is an active-site residue. Residue Ser-41 coordinates substrate. ATP-binding positions include Asp-51 and 112-115 (EGAG). Residues Asp-51 and Glu-112 each coordinate Mg(2+).

The protein belongs to the dethiobiotin synthetase family. As to quaternary structure, homodimer. Mg(2+) serves as cofactor.

The protein localises to the cytoplasm. The enzyme catalyses (7R,8S)-7,8-diammoniononanoate + CO2 + ATP = (4R,5S)-dethiobiotin + ADP + phosphate + 3 H(+). It participates in cofactor biosynthesis; biotin biosynthesis; biotin from 7,8-diaminononanoate: step 1/2. Functionally, catalyzes a mechanistically unusual reaction, the ATP-dependent insertion of CO2 between the N7 and N8 nitrogen atoms of 7,8-diaminopelargonic acid (DAPA, also called 7,8-diammoniononanoate) to form a ureido ring. This is ATP-dependent dethiobiotin synthetase BioD from Bacillus cereus (strain B4264).